A 375-amino-acid chain; its full sequence is 23S rRNA (uracil(747)-C(5))-methyltransferase RlmC (375 aa).

The [4Fe-4S] cluster site is built by Cys3, Cys11, Cys14, and Cys87. S-adenosyl-L-methionine is bound by residues Gln212, Phe241, Glu262, and Asn307. Cys334 functions as the Nucleophile in the catalytic mechanism.

The protein belongs to the class I-like SAM-binding methyltransferase superfamily. RNA M5U methyltransferase family. RlmC subfamily.

It catalyses the reaction uridine(747) in 23S rRNA + S-adenosyl-L-methionine = 5-methyluridine(747) in 23S rRNA + S-adenosyl-L-homocysteine + H(+). In terms of biological role, catalyzes the formation of 5-methyl-uridine at position 747 (m5U747) in 23S rRNA. This Shigella boydii serotype 4 (strain Sb227) protein is 23S rRNA (uracil(747)-C(5))-methyltransferase RlmC.